Consider the following 132-residue polypeptide: 3-aminoacrylate deaminase RutC (132 aa).

The protein belongs to the RutC family.

The enzyme catalyses (Z)-3-aminoacrylate + H2O + H(+) = 3-oxopropanoate + NH4(+). Involved in pyrimidine catabolism. Catalyzes the deamination of 3-aminoacrylate to malonic semialdehyde, a reaction that can also occur spontaneously. RutC may facilitate the reaction and modulate the metabolic fitness, rather than catalyzing essential functions. In Cronobacter turicensis (strain DSM 18703 / CCUG 55852 / LMG 23827 / z3032), this protein is 3-aminoacrylate deaminase RutC.